Here is a 778-residue protein sequence, read N- to C-terminus: Arf-GAP with coiled-coil, ANK repeat and PH domain-containing protein 2 (778 aa).

The BAR domain maps to 1 to 226 (MKMTVDFEEC…MKDLGAQLDR (226 aa)). The PH domain maps to 266-361 (GIVMEGYLFK…WIKAVQTSIA (96 aa)). Positions 371–391 (SEKLDKKSSPSTGSLDSGNES) are disordered. Polar residues predominate over residues 379–388 (SPSTGSLDSG). 2 positions are modified to phosphoserine: S384 and S387. Positions 399–520 (ESALQRVQCI…KFVDKYSISL (122 aa)) constitute an Arf-GAP domain. A C4-type zinc finger spans residues 414–437 (CCDCGLADPRWASINLGITLCIEC). S521 bears the Phosphoserine mark. The segment at 540–599 (SISKFGPGDQVRASAQSSVRSNDSGIQQSSDDGRESLPSTVSANSLYEPEGERQDSSMFL) is disordered. Over residues 552 to 569 (ASAQSSVRSNDSGIQQSS) the composition is skewed to polar residues. Phosphoserine is present on residues S581 and S584. ANK repeat units lie at residues 640–669 (NKAT…NVNQ), 673–702 (QGRG…NQHA), and 706–735 (EGKD…NEEM). Phosphotyrosine is present on Y742. Position 775 is a phosphoserine (S775).

As to quaternary structure, interacts (via KANK domains) with RAB35 (GTP-bound form); the interaction is direct and probably recruits ACAP2 to membranes including plasma membrane. Interacts with MICALL1; the interaction is indirect through RAB35. In terms of tissue distribution, widely expressed. Highest level in lung.

The protein resides in the cell membrane. It localises to the endosome membrane. Its activity is regulated as follows. GAP activity stimulated by phosphatidylinositol 4,5-bisphosphate (PIP2) and phosphatidic acid. Functionally, GTPase-activating protein (GAP) for ADP ribosylation factor 6 (ARF6). Doesn't show GAP activity for RAB35. The protein is Arf-GAP with coiled-coil, ANK repeat and PH domain-containing protein 2 (ACAP2) of Homo sapiens (Human).